Reading from the N-terminus, the 221-residue chain is 7-cyano-7-deazaguanine synthase (221 aa).

8 to 18 (LSGGMDSAAVI) lines the ATP pocket. Cysteine 186, cysteine 196, cysteine 199, and cysteine 202 together coordinate Zn(2+).

This sequence belongs to the QueC family. The cofactor is Zn(2+).

It catalyses the reaction 7-carboxy-7-deazaguanine + NH4(+) + ATP = 7-cyano-7-deazaguanine + ADP + phosphate + H2O + H(+). It participates in purine metabolism; 7-cyano-7-deazaguanine biosynthesis. Catalyzes the ATP-dependent conversion of 7-carboxy-7-deazaguanine (CDG) to 7-cyano-7-deazaguanine (preQ(0)). The chain is 7-cyano-7-deazaguanine synthase from Stenotrophomonas maltophilia (strain R551-3).